The chain runs to 245 residues: tRNA pseudouridine synthase A (245 aa).

Aspartate 52 (nucleophile) is an active-site residue. Substrate is bound at residue tyrosine 112.

The protein belongs to the tRNA pseudouridine synthase TruA family. As to quaternary structure, homodimer.

It catalyses the reaction uridine(38/39/40) in tRNA = pseudouridine(38/39/40) in tRNA. Formation of pseudouridine at positions 38, 39 and 40 in the anticodon stem and loop of transfer RNAs. This Dictyoglomus turgidum (strain DSM 6724 / Z-1310) protein is tRNA pseudouridine synthase A.